Reading from the N-terminus, the 210-residue chain is Chaperone protein TorD (210 aa).

This sequence belongs to the TorD/DmsD family. TorD subfamily.

Its subcellular location is the cytoplasm. In terms of biological role, involved in the biogenesis of TorA. Acts on TorA before the insertion of the molybdenum cofactor and, as a result, probably favors a conformation of the apoenzyme that is competent for acquiring the cofactor. The chain is Chaperone protein TorD from Salmonella dublin (strain CT_02021853).